A 322-amino-acid polypeptide reads, in one-letter code: Beta-1,4-galactosyltransferase 7 (322 aa).

Topologically, residues 1–9 (MVNISTINW) are cytoplasmic. A helical; Signal-anchor for type II membrane protein transmembrane segment spans residues 10-30 (VFVCGLSFCLGGIAVLSLMPL). Residues 31–322 (GSDCVCPLSN…TAAAASAVQT (292 aa)) lie on the Lumenal side of the membrane. UDP-alpha-D-galactose contacts are provided by P82, R84, D145, and V146. Residue D147 participates in Mn(2+) binding. UDP-alpha-D-galactose-binding residues include Y177, G185, W207, and G208. L209 is a binding site for beta-D-xylose. Residue E210 coordinates UDP-alpha-D-galactose. D211 and D212 together coordinate beta-D-xylose. Residue N236 is glycosylated (N-linked (GlcNAc...) asparagine). UDP-alpha-D-galactose-binding residues include H241, H243, and R250. Mn(2+) is bound by residues H241 and H243. 2 disulfide bridges follow: C255–C310 and C300–C308.

This sequence belongs to the glycosyltransferase 7 family. The cofactor is Mn(2+). As to expression, expressed in male and female adults. Expressed in head.

It is found in the golgi apparatus membrane. The enzyme catalyses 3-O-(beta-D-xylosyl)-L-seryl-[protein] + UDP-alpha-D-galactose = 3-O-(beta-D-galactosyl-(1-&gt;4)-beta-D-xylosyl)-L-seryl-[protein] + UDP + H(+). It participates in protein modification; protein glycosylation. Functionally, transfers galactose from UDP-D-Galactose (UDP-Gal) to the acceptor xylose residue in the linkage tetrasaccharide region of the glycosaminoglycan side chain of proteoglycans. No activity towards beta-GlcNAc, beta-Glc, beta-Gal, and beta-GalNAc as acceptors. The chain is Beta-1,4-galactosyltransferase 7 from Drosophila melanogaster (Fruit fly).